The sequence spans 257 residues: Hydroxyacylglutathione hydrolase (257 aa).

Residues His54, His56, Asp58, His59, His113, Asp137, and His175 each contribute to the Zn(2+) site.

It belongs to the metallo-beta-lactamase superfamily. Glyoxalase II family. As to quaternary structure, monomer. The cofactor is Zn(2+).

It catalyses the reaction an S-(2-hydroxyacyl)glutathione + H2O = a 2-hydroxy carboxylate + glutathione + H(+). Its pathway is secondary metabolite metabolism; methylglyoxal degradation; (R)-lactate from methylglyoxal: step 2/2. In terms of biological role, thiolesterase that catalyzes the hydrolysis of S-D-lactoyl-glutathione to form glutathione and D-lactic acid. The polypeptide is Hydroxyacylglutathione hydrolase (Crocosphaera subtropica (strain ATCC 51142 / BH68) (Cyanothece sp. (strain ATCC 51142))).